The following is a 101-amino-acid chain: Large ribosomal subunit protein bL25 (101 aa).

It belongs to the bacterial ribosomal protein bL25 family. Part of the 50S ribosomal subunit; part of the 5S rRNA/L5/L18/L25 subcomplex. Contacts the 5S rRNA. Binds to the 5S rRNA independently of L5 and L18.

Its function is as follows. This is one of the proteins that binds to the 5S RNA in the ribosome where it forms part of the central protuberance. The polypeptide is Large ribosomal subunit protein bL25 (Thermosynechococcus vestitus (strain NIES-2133 / IAM M-273 / BP-1)).